Reading from the N-terminus, the 391-residue chain is Sulfate adenylyltransferase (391 aa).

The protein belongs to the sulfate adenylyltransferase family.

It carries out the reaction sulfate + ATP + H(+) = adenosine 5'-phosphosulfate + diphosphate. It functions in the pathway sulfur metabolism; hydrogen sulfide biosynthesis; sulfite from sulfate: step 1/3. This is Sulfate adenylyltransferase from Lactiplantibacillus plantarum (strain ATCC BAA-793 / NCIMB 8826 / WCFS1) (Lactobacillus plantarum).